We begin with the raw amino-acid sequence, 339 residues long: Protein FAM76B (339 aa).

An N-acetylalanine modification is found at A2. A phosphoserine mark is found at S22 and S148. The disordered stretch occupies residues E144–T243. Positions S148–S160 are enriched in low complexity. Basic residues predominate over residues H167–V189. Position 193 is a phosphoserine (S193). T215 carries the post-translational modification Phosphothreonine. Residues T215 to S224 show a composition bias toward basic and acidic residues. Over residues N228–T243 the composition is skewed to polar residues. Residues L248–K328 are a coiled coil.

Belongs to the FAM76 family. In terms of assembly, interacts with HNRNPA2B1 (via C-terminus); the interaction results in retention of HNRNPA2B1 in the nucleus and inhibition of the NF-kappa-B-mediated inflammatory pathway.

The protein resides in the nucleus speckle. Negatively regulates the NF-kappa-B-mediated inflammatory pathway by preventing the translocation of HNRNPA2B1 from the nucleus to the cytoplasm. Inhibits the PI3K/Akt/NF-kappa-B pathway-mediated polarization of M1 macrophages by binding to and stabilizing PIK3CD mRNA, resulting in increased levels of PIK3CD protein and increased levels of phosphorylated downstream target AKT which leads to decreased NF-kappa-B signaling. This is Protein FAM76B (Fam76b) from Mus musculus (Mouse).